Here is a 339-residue protein sequence, read N- to C-terminus: Heat-inducible transcription repressor HrcA (339 aa).

The protein belongs to the HrcA family.

Functionally, negative regulator of class I heat shock genes (grpE-dnaK-dnaJ and groELS operons). Prevents heat-shock induction of these operons. In Clostridium perfringens (strain SM101 / Type A), this protein is Heat-inducible transcription repressor HrcA.